Reading from the N-terminus, the 356-residue chain is Glutamine synthetase cytosolic isozyme 1-1 (356 aa).

The residue at position 2 (S2) is an N-acetylserine. Phosphoserine occurs at positions 2 and 48. In terms of domain architecture, GS beta-grasp spans 19–99 (IIAEYIWVGG…VMCDAYTPAG (81 aa)). The tract at residues 36-62 (KARTLPGPVTDPSQLPKWNYDGSSTGQ) is disordered. Residues 106-356 (KRHAAAKVFS…IAETTILWNP (251 aa)) enclose the GS catalytic domain.

This sequence belongs to the glutamine synthetase family. Homooctamer. Interacts with CRK3 and GRF3. In terms of processing, phosphorylated by CRK3. As to expression, expressed in root tips, root hairs and epidermis. Ubiquitously expressed with higher levels in siliques and roots.

Its subcellular location is the cytoplasm. It catalyses the reaction L-glutamate + NH4(+) + ATP = L-glutamine + ADP + phosphate + H(+). Its function is as follows. High-affinity glutamine synthetase which catalyzes the synthesis of glutamine from ammonium and glutamate. May contribute to the homeostatic control of glutamine synthesis in roots. In Arabidopsis thaliana (Mouse-ear cress), this protein is Glutamine synthetase cytosolic isozyme 1-1 (GLN1-1).